We begin with the raw amino-acid sequence, 309 residues long: Taste receptor type 2 member 113 (309 aa).

The Extracellular segment spans residues 1-10 (MVAVLQSTLP). A helical transmembrane segment spans residues 11–31 (IIFSMEFIMGTLGNGFIFLIV). The Cytoplasmic portion of the chain corresponds to 32-55 (CIDWVQRRKISLVDQIRTALAISR). A helical membrane pass occupies residues 56-76 (IALIWLIFLDWWVSVHYPALH). At 77–80 (ETGK) the chain is on the extracellular side. A helical transmembrane segment spans residues 81–101 (MLSTYLISWTVINHCNFWLTA). The Cytoplasmic portion of the chain corresponds to 102–127 (NLSILYFLKIANFSNIIFLYLKFRSK). A helical transmembrane segment spans residues 128-148 (NVVLVTLLVSLFFLFLNTVII). The Extracellular segment spans residues 149-185 (KIFSDVCFDSVQRNVSQIFIMYNHEQICKFLSFTNPM). Asparagine 162 is a glycosylation site (N-linked (GlcNAc...) asparagine). A helical membrane pass occupies residues 186-206 (FTFIPFVMSTVMFSLLIFSLW). Topologically, residues 207–229 (RHLKNMQHTAKGCRDISTTVHIR) are cytoplasmic. The helical transmembrane segment at 230-250 (ALQTIIVSVVLYTIFFLSFFV) threads the bilayer. Residues 251-262 (KVWSFVSPERYL) are Extracellular-facing. Residues 263-283 (IFLFVWALGNAVFSAHPFVMI) traverse the membrane as a helical segment. Residues 284 to 309 (LVNRRLRLASLSLIFWLWYRFKNIEV) lie on the Cytoplasmic side of the membrane.

Belongs to the G-protein coupled receptor T2R family.

Its subcellular location is the membrane. Its function is as follows. Putative taste receptor which may play a role in the perception of bitterness. The chain is Taste receptor type 2 member 113 from Mus musculus (Mouse).